We begin with the raw amino-acid sequence, 84 residues long: Exodeoxyribonuclease 7 small subunit (84 aa).

Belongs to the XseB family. Heterooligomer composed of large and small subunits.

It is found in the cytoplasm. It carries out the reaction Exonucleolytic cleavage in either 5'- to 3'- or 3'- to 5'-direction to yield nucleoside 5'-phosphates.. Functionally, bidirectionally degrades single-stranded DNA into large acid-insoluble oligonucleotides, which are then degraded further into small acid-soluble oligonucleotides. The sequence is that of Exodeoxyribonuclease 7 small subunit from Azoarcus sp. (strain BH72).